An 858-amino-acid chain; its full sequence is Neurofilament medium polypeptide (858 aa).

Serine 2 carries the N-acetylserine modification. Residues 2-99 (SYTMEPLGNP…KLSRSNEKEQ (98 aa)) are head. The tract at residues 22–57 (ATYSRASASPSSGFRSQSWSRGSGSTVSSSYKRTNL) is disordered. Residues 30-54 (SPSSGFRSQSWSRGSGSTVSSSYKR) show a composition bias toward low complexity. Threonine 47 is a glycosylation site (O-linked (GlcNAc) threonine). The 312-residue stretch at 96 to 407 (EKEQLQGLND…KLLEGEETRF (312 aa)) folds into the IF rod domain. Residues 100–131 (LQGLNDRFAGYIEKVHYLEQQNKEIEAELAAL) are coil 1A. Residues 132–144 (RQKHAGRAQLGDA) form a linker 1 region. The interval 145–243 (YEQELRELRG…EEEVAELLAQ (99 aa)) is coil 1B. Residues 244-260 (LQASHATVERKDYLKTD) form a linker 12 region. The coil 2A stretch occupies residues 261 to 282 (LTTALKEIRAQLECQSDHNMHQ). The interval 283 to 286 (AEEW) is linker 2. Residues 287–407 (FKCRYAKLTE…KLLEGEETRF (121 aa)) form a coil 2B region. The interval 408-858 (SAFSGSITGP…SHAVVKEIKE (451 aa)) is tail. Threonine 427 is a glycosylation site (O-linked (GlcNAc) threonine). The tract at residues 478 to 788 (AAKAQEEEQE…VVTNGLDVSP (311 aa)) is disordered. 2 stretches are compositionally biased toward acidic residues: residues 484–500 (EEQEEEKAEEEAVEEEA) and 509–524 (AAEEEEKEEEEAEEEE). Residues 525-541 (AAKSDAAEEGGSKKEEI) are compositionally biased toward basic and acidic residues. Acidic residues predominate over residues 542–555 (EEKEEGEEAEEEEA). Over residues 556 to 572 (EAKGKAEEAGAKVEKVK) the composition is skewed to basic and acidic residues. Residues 576-586 (AKSPPKSPPKS) show a composition bias toward pro residues. Residues 590–601 (EQAKAVQKAAAE) are compositionally biased toward low complexity. The span at 602-623 (VGKDQKAEKAAEKAAKEEKAAS) shows a compositional bias: basic and acidic residues. The span at 624–637 (PEKPATPKVTSPEK) shows a compositional bias: low complexity. 2 stretches are compositionally biased toward basic and acidic residues: residues 651-664 (ITPEKVRSPEKPTT) and 675-727 (ASPE…KAVV). Positions 728 to 743 (EESITVTKVTKVTAEV) are enriched in low complexity. A compositionally biased stretch (basic and acidic residues) spans 744-771 (EVSKEARKEDIAVNGEVEEKKDEAKEKE).

This sequence belongs to the intermediate filament family. Post-translationally, there are a number of repeats of the tripeptide K-S-P, NFM is phosphorylated on a number of the serines in this motif. It is thought that phosphorylation of NFM results in the formation of interfilament cross bridges that are important in the maintenance of axonal caliber. In terms of processing, phosphorylation seems to play a major role in the functioning of the larger neurofilament polypeptides (NF-M and NF-H), the levels of phosphorylation being altered developmentally and coincident with a change in the neurofilament function.

It is found in the cytoplasm. The protein resides in the cytoskeleton. The protein localises to the cell projection. It localises to the axon. Its function is as follows. Neurofilaments usually contain three intermediate filament proteins: NEFL, NEFM, and NEFH which are involved in the maintenance of neuronal caliber. May additionally cooperate with other neuronal intermediate filament proteins to form neuronal filamentous networks. The polypeptide is Neurofilament medium polypeptide (NEFM) (Gallus gallus (Chicken)).